An 86-amino-acid polypeptide reads, in one-letter code: Protein GOLVEN 1 (86 aa).

The signal sequence occupies residues 1–29 (MSCSLRSGLVIVFCFILLLLSSNVGCASA). The propeptide occupies 30-70 (ARRLRSHKHHHHKVASLDVFNGGERRRALGGVETGEEVVVM). Position 72 is a sulfotyrosine (Tyr-72). Pro-80 is subject to Hydroxyproline. The propeptide occupies 84 to 86 (EKS).

It belongs to the RGF family. As to quaternary structure, binds to LRR receptor-like serine/threonine-protein kinases to trigger their dimerization with SERK proteins and subsequent signaling. In terms of tissue distribution, expressed in stems, hypocotyls, cotyledons, leaves, flowers, shoot apex, siliques, stamens and petals.

It localises to the endoplasmic reticulum. Its subcellular location is the secreted. In terms of biological role, signaling peptide (root growth factor) that regulates the pattern of root growth and lateral root development by modulating the length and the number of cortical cells in the root apical meristem (RAM), and the anticlinal asymmetric cell divisions in lateral root initiation cells. Also involved in the regulation of hypocotyl bending and root gravitropism in a PIN2-traffic dependent manner, thus influencing the formation of auxin gradients. Maintains the postembryonic root stem cell niche. This is Protein GOLVEN 1 from Arabidopsis thaliana (Mouse-ear cress).